The primary structure comprises 187 residues: MATTADFKNGLVLVIDGQLWTIIGFQHVKPGKGPAFVRTKLKNVLSGKVVDKTYNAGVKVDTATVDRRDTTYLYRDGANFVFMDSQDYEQHPLPESLVGDTARFLLEGMSVQVAFHNGVPLYVELPVTVELEVTHTEPGLQGDRSSAGTKPATLETGAQINVPLFINTGDKLKVDSRDGSYLGRVNV.

It belongs to the elongation factor P family.

It is found in the cytoplasm. It participates in protein biosynthesis; polypeptide chain elongation. Functionally, involved in peptide bond synthesis. Stimulates efficient translation and peptide-bond synthesis on native or reconstituted 70S ribosomes in vitro. Probably functions indirectly by altering the affinity of the ribosome for aminoacyl-tRNA, thus increasing their reactivity as acceptors for peptidyl transferase. This is Elongation factor P from Mycobacterium leprae (strain Br4923).